A 484-amino-acid chain; its full sequence is Probable cytosol aminopeptidase (484 aa).

The Mn(2+) site is built by Lys256 and Asp261. The active site involves Lys268. Mn(2+)-binding residues include Asp279, Asp338, and Glu340. Arg342 is a catalytic residue.

Belongs to the peptidase M17 family. Requires Mn(2+) as cofactor.

It is found in the cytoplasm. The enzyme catalyses Release of an N-terminal amino acid, Xaa-|-Yaa-, in which Xaa is preferably Leu, but may be other amino acids including Pro although not Arg or Lys, and Yaa may be Pro. Amino acid amides and methyl esters are also readily hydrolyzed, but rates on arylamides are exceedingly low.. It carries out the reaction Release of an N-terminal amino acid, preferentially leucine, but not glutamic or aspartic acids.. Its function is as follows. Presumably involved in the processing and regular turnover of intracellular proteins. Catalyzes the removal of unsubstituted N-terminal amino acids from various peptides. The chain is Probable cytosol aminopeptidase from Methylibium petroleiphilum (strain ATCC BAA-1232 / LMG 22953 / PM1).